Reading from the N-terminus, the 102-residue chain is Small ribosomal subunit protein uS10 (102 aa).

This sequence belongs to the universal ribosomal protein uS10 family. As to quaternary structure, part of the 30S ribosomal subunit.

Its function is as follows. Involved in the binding of tRNA to the ribosomes. This chain is Small ribosomal subunit protein uS10, found in Treponema pallidum (strain Nichols).